The primary structure comprises 146 residues: Phospholipase A2 PS22 (146 aa).

Residues 1–19 form the signal peptide; that stretch reads MYPAHLLVLLAVCVSLLGA. A propeptide spanning residues 20–27 is cleaved from the precursor; sequence ASVPPQPL. Cystine bridges form between cysteine 38/cysteine 98, cysteine 54/cysteine 145, cysteine 56/cysteine 72, cysteine 71/cysteine 126, cysteine 78/cysteine 119, cysteine 87/cysteine 112, and cysteine 105/cysteine 117. Positions 55, 57, and 59 each coordinate Ca(2+). The active site involves histidine 75. Residue aspartate 76 coordinates Ca(2+). Aspartate 120 is a catalytic residue.

This sequence belongs to the phospholipase A2 family. Group I subfamily. D49 sub-subfamily. Ca(2+) serves as cofactor. In terms of tissue distribution, expressed by the venom gland.

The protein localises to the secreted. The catalysed reaction is a 1,2-diacyl-sn-glycero-3-phosphocholine + H2O = a 1-acyl-sn-glycero-3-phosphocholine + a fatty acid + H(+). In terms of biological role, snake venom phospholipase A2 (PLA2) that inhibits collagen-induced platelet aggregation. PLA2 catalyzes the calcium-dependent hydrolysis of the 2-acyl groups in 3-sn-phosphoglycerides. This chain is Phospholipase A2 PS22, found in Drysdalia coronoides (White-lipped snake).